The following is a 1039-amino-acid chain: uncharacterized protein (1039 aa).

The span at 1 to 19 (MSLLMAHRKSKSSQRKLRN) shows a compositional bias: basic residues. A disordered region spans residues 1 to 38 (MSLLMAHRKSKSSQRKLRNRSSSLTPQKRRIRASKGSH).

This is an uncharacterized protein from Sinorhizobium fredii (strain NBRC 101917 / NGR234).